The following is a 460-amino-acid chain: Diguanylate cyclase DosC (460 aa).

His-98 is a binding site for heme. Positions 325 to 458 (TPLSVLIIDV…GRNRVELWKA (134 aa)) constitute a GGDEF domain. Mg(2+) is bound at residue Asp-333. Asn-341 and Asp-350 together coordinate substrate. Position 376 (Asp-376) interacts with Mg(2+). Residue Asp-376 is the Proton acceptor of the active site.

The cofactor is heme. Mg(2+) serves as cofactor.

The enzyme catalyses 2 GTP = 3',3'-c-di-GMP + 2 diphosphate. The protein operates within purine metabolism; 3',5'-cyclic di-GMP biosynthesis. Its function is as follows. Globin-coupled heme-based oxygen sensor protein displaying diguanylate cyclase (DGC) activity in response to oxygen availability. Thus, catalyzes the synthesis of cyclic diguanylate (c-di-GMP) via the condensation of 2 GTP molecules. Cyclic-di-GMP is a second messenger which controls cell surface-associated traits in bacteria. The protein is Diguanylate cyclase DosC (dosC) of Escherichia coli O157:H7.